Reading from the N-terminus, the 503-residue chain is Putative acyl--CoA ligase YdaB (503 aa).

The protein belongs to the ATP-dependent AMP-binding enzyme family.

This chain is Putative acyl--CoA ligase YdaB (ydaB), found in Bacillus subtilis (strain 168).